A 236-amino-acid chain; its full sequence is Mitochondrial-abundant heat soluble protein (236 aa).

Residues 1-73 (MSRYLLRDVQ…AARAGVVLRG (73 aa)) constitute a mitochondrion transit peptide. Disordered regions lie at residues 102–135 (RIHS…NEAA) and 165–209 (RSNG…EIVA). Polar residues-rich tracts occupy residues 105-126 (SQSS…NSPQ) and 192-202 (APDSSKNTKSV). Positions 126 to 143 (QPEGKANEAAERAKQFMN) match the MAHS motif motif.

It localises to the mitochondrion. In terms of biological role, mitochondrial heat soluble protein acting as a molecular shield in water-deficient condition. The chain is Mitochondrial-abundant heat soluble protein from Ramazzottius varieornatus (Water bear).